A 529-amino-acid polypeptide reads, in one-letter code: Laccase-1 (529 aa).

The signal sequence occupies residues Met1–Ala23. Plastocyanin-like domains follow at residues Ile25–Tyr159, Asp170–Tyr312, and Thr380–Asp499. Residue Asn57 is glycosylated (N-linked (GlcNAc...) asparagine). The Cu cation site is built by His96, His98, His141, and His143. Intrachain disulfides connect Cys117/Cys514 and Cys149/Cys236. N-linked (GlcNAc...) asparagine glycosylation is found at Asn239 and Asn282. Residues His425, His428, His430, His481, Cys482, His483, and His487 each contribute to the Cu cation site.

The protein belongs to the multicopper oxidase family. Cu cation is required as a cofactor.

Its subcellular location is the secreted. The catalysed reaction is 4 hydroquinone + O2 = 4 benzosemiquinone + 2 H2O. In terms of biological role, lignin degradation and detoxification of lignin-derived products. The sequence is that of Laccase-1 (POX1) from Pleurotus ostreatus (Oyster mushroom).